Reading from the N-terminus, the 496-residue chain is Glutamate--tRNA ligase (496 aa).

The short motif at 12–22 (PSPTGHLHIGN) is the 'HIGH' region element. Residues 259–263 (KLSKR) carry the 'KMSKS' region motif. ATP is bound at residue Lys262.

Belongs to the class-I aminoacyl-tRNA synthetase family. Glutamate--tRNA ligase type 1 subfamily. Monomer.

It is found in the cytoplasm. The catalysed reaction is tRNA(Glu) + L-glutamate + ATP = L-glutamyl-tRNA(Glu) + AMP + diphosphate. Functionally, catalyzes the attachment of glutamate to tRNA(Glu) in a two-step reaction: glutamate is first activated by ATP to form Glu-AMP and then transferred to the acceptor end of tRNA(Glu). The chain is Glutamate--tRNA ligase from Lactiplantibacillus plantarum (strain ATCC BAA-793 / NCIMB 8826 / WCFS1) (Lactobacillus plantarum).